We begin with the raw amino-acid sequence, 210 residues long: Cytochrome c oxidase subunit 2 (210 aa).

Over 1 to 15 (MSFILTFWMIFLMDS) the chain is Mitochondrial intermembrane. The chain crosses the membrane as a helical span at residues 16–36 (IIVLISFSIFLSVWICALIIA). Residues 37–63 (TVLTVTKINNIYCTWDFISSKFIDTYW) lie on the Mitochondrial matrix side of the membrane. Residues 64–84 (FVLGMMFILCLLLRLCLLLYF) form a helical membrane-spanning segment. The Mitochondrial intermembrane portion of the chain corresponds to 85–210 (SCINFVSFDL…GFMPIVINFI (126 aa)). Positions 157, 192, 194, 196, 200, and 203 each coordinate Cu cation. Glutamate 194 lines the Mg(2+) pocket.

This sequence belongs to the cytochrome c oxidase subunit 2 family. In terms of assembly, component of the cytochrome c oxidase (complex IV, CIV), a multisubunit enzyme composed of a catalytic core of 3 subunits and several supernumerary subunits. The complex exists as a monomer or a dimer and forms supercomplexes (SCs) in the inner mitochondrial membrane with ubiquinol-cytochrome c oxidoreductase (cytochrome b-c1 complex, complex III, CIII). Cu cation is required as a cofactor.

It is found in the mitochondrion inner membrane. The catalysed reaction is 4 Fe(II)-[cytochrome c] + O2 + 8 H(+)(in) = 4 Fe(III)-[cytochrome c] + 2 H2O + 4 H(+)(out). Its function is as follows. Component of the cytochrome c oxidase, the last enzyme in the mitochondrial electron transport chain which drives oxidative phosphorylation. The respiratory chain contains 3 multisubunit complexes succinate dehydrogenase (complex II, CII), ubiquinol-cytochrome c oxidoreductase (cytochrome b-c1 complex, complex III, CIII) and cytochrome c oxidase (complex IV, CIV), that cooperate to transfer electrons derived from NADH and succinate to molecular oxygen, creating an electrochemical gradient over the inner membrane that drives transmembrane transport and the ATP synthase. Cytochrome c oxidase is the component of the respiratory chain that catalyzes the reduction of oxygen to water. Electrons originating from reduced cytochrome c in the intermembrane space (IMS) are transferred via the dinuclear copper A center (CU(A)) of subunit 2 and heme A of subunit 1 to the active site in subunit 1, a binuclear center (BNC) formed by heme A3 and copper B (CU(B)). The BNC reduces molecular oxygen to 2 water molecules using 4 electrons from cytochrome c in the IMS and 4 protons from the mitochondrial matrix. This chain is Cytochrome c oxidase subunit 2 (COXII), found in Trypanosoma brucei brucei.